A 564-amino-acid polypeptide reads, in one-letter code: Hexose transporter HXT13 (564 aa).

Residues 1 to 52 lie on the Cytoplasmic side of the membrane; it reads MSSAQSSIDSDGDVRDADIHVAPPVEKEWSDGFDDNEVINGDNVEPPKRGLI. The chain crosses the membrane as a helical span at residues 53–73; the sequence is GYLVIYLLCYPISFGGFLPGW. Over 74–109 the chain is Extracellular; sequence DSGITAGFINMDNFKMNFGSYKHSTGEYYLSNVRMG. The chain crosses the membrane as a helical span at residues 110–130; sequence LLVAMFSIGCAIGGLIFARLA. The Cytoplasmic segment spans residues 131–136; the sequence is DTLGRR. A helical membrane pass occupies residues 137 to 157; sequence LAIVIVVLVYMVGAIIQISSN. The Extracellular segment spans residues 158–167; the sequence is HKWYQYFVGK. The helical transmembrane segment at 168–188 threads the bilayer; it reads IIYGLGAGGCSVLCPMLLSEI. Residues 189-194 are Cytoplasmic-facing; it reads APTDLR. A helical membrane pass occupies residues 195 to 215; it reads GGLVSLYQLNMTFGIFLGYCS. Over 216–229 the chain is Extracellular; the sequence is VYGTRKYDNTAQWR. Residues 230–250 form a helical membrane-spanning segment; sequence VPLGLCFLWALIIIIGMLLVP. Residues 251-333 lie on the Cytoplasmic side of the membrane; it reads ESPRYLIECE…VQTFLQLTGE (83 aa). A helical membrane pass occupies residues 334 to 350; that stretch reads NYFFFYGTTIFKSVGLT. At 351–356 the chain is on the extracellular side; sequence DGFETS. A helical membrane pass occupies residues 357 to 374; the sequence is IVLGTVNFFSTIIAVMVV. Over 375–381 the chain is Cytoplasmic; the sequence is DKIGRRK. A helical transmembrane segment spans residues 382 to 402; sequence CLLFGAAGMMACMVIFASIGV. Residues 403–424 are Extracellular-facing; sequence KCLYPHGQDGPSSKGAGNAMIV. Residues 425–445 traverse the membrane as a helical segment; sequence FTCFYIFCFATTWAPVAYIVV. Over 446 to 462 the chain is Cytoplasmic; that stretch reads AESFPSKVKSRAMSIST. The helical transmembrane segment at 463–483 threads the bilayer; that stretch reads ACNWLWQFLIGFFTPFITGSI. Position 484 (H484) is a topological domain, extracellular. The helical transmembrane segment at 485-505 threads the bilayer; the sequence is FYYGYVFVGCLVAMFLYVFFF. Over 506–564 the chain is Cytoplasmic; it reads LPETIGLSLEEIQLLYEEGIKPWKSASWVPPSRRGISSEESKTEKKDWKKFLKFSKNSD. A disordered region spans residues 530–551; the sequence is SASWVPPSRRGISSEESKTEKK. The segment covering 541–551 has biased composition (basic and acidic residues); sequence ISSEESKTEKK.

The protein belongs to the major facilitator superfamily. Sugar transporter (TC 2.A.1.1) family.

It is found in the membrane. Probable glucose transporter. This is Hexose transporter HXT13 (HXT13) from Saccharomyces cerevisiae (strain ATCC 204508 / S288c) (Baker's yeast).